The primary structure comprises 476 residues: 3-isopropylmalate dehydratase large subunit (476 aa).

Residues Cys-357, Cys-417, and Cys-420 each contribute to the [4Fe-4S] cluster site.

It belongs to the aconitase/IPM isomerase family. LeuC type 1 subfamily. As to quaternary structure, heterodimer of LeuC and LeuD. [4Fe-4S] cluster serves as cofactor.

It catalyses the reaction (2R,3S)-3-isopropylmalate = (2S)-2-isopropylmalate. It participates in amino-acid biosynthesis; L-leucine biosynthesis; L-leucine from 3-methyl-2-oxobutanoate: step 2/4. In terms of biological role, catalyzes the isomerization between 2-isopropylmalate and 3-isopropylmalate, via the formation of 2-isopropylmaleate. The sequence is that of 3-isopropylmalate dehydratase large subunit from Mycolicibacterium paratuberculosis (strain ATCC BAA-968 / K-10) (Mycobacterium paratuberculosis).